The primary structure comprises 245 residues: DnaJ homolog subfamily B member 6-B (245 aa).

One can recognise a J domain in the interval 3 to 69; it reads EYYDVLGVQR…KKRDIYDKYG (67 aa).

As to quaternary structure, homooligomer.

The protein resides in the cytoplasm. Its subcellular location is the perinuclear region. It localises to the nucleus. Its function is as follows. Has a stimulatory effect on the ATPase activity of HSP70 in a dose-dependent and time-dependent manner and hence acts as a co-chaperone of HSP70. Plays an indispensable role in the organization of KRT8/KRT18 filaments. Acts as an endogenous molecular chaperone for neuronal proteins including huntingtin. Suppresses aggregation and toxicity of polyglutamine-containing, aggregation-prone proteins. Also reduces cellular toxicity and caspase-3 activity. This chain is DnaJ homolog subfamily B member 6-B (dnajb6-b), found in Xenopus laevis (African clawed frog).